The following is a 396-amino-acid chain: Agropine synthesis cyclase (396 aa).

It belongs to the peptidase M24B family.

The protein is Agropine synthesis cyclase (ags) of Rhizobium rhizogenes (Agrobacterium rhizogenes).